The primary structure comprises 158 residues: NAD(P)H-quinone oxidoreductase subunit J, chloroplastic (158 aa).

Belongs to the complex I 30 kDa subunit family. NDH is composed of at least 16 different subunits, 5 of which are encoded in the nucleus.

The protein localises to the plastid. It localises to the chloroplast thylakoid membrane. It carries out the reaction a plastoquinone + NADH + (n+1) H(+)(in) = a plastoquinol + NAD(+) + n H(+)(out). It catalyses the reaction a plastoquinone + NADPH + (n+1) H(+)(in) = a plastoquinol + NADP(+) + n H(+)(out). Its function is as follows. NDH shuttles electrons from NAD(P)H:plastoquinone, via FMN and iron-sulfur (Fe-S) centers, to quinones in the photosynthetic chain and possibly in a chloroplast respiratory chain. The immediate electron acceptor for the enzyme in this species is believed to be plastoquinone. Couples the redox reaction to proton translocation, and thus conserves the redox energy in a proton gradient. In Morus indica (Mulberry), this protein is NAD(P)H-quinone oxidoreductase subunit J, chloroplastic.